We begin with the raw amino-acid sequence, 299 residues long: Ribonuclease Z (299 aa).

Zn(2+)-binding residues include H60, H62, D64, H65, H137, D207, and H265. D64 (proton acceptor) is an active-site residue.

This sequence belongs to the RNase Z family. As to quaternary structure, homodimer. Zn(2+) serves as cofactor.

It catalyses the reaction Endonucleolytic cleavage of RNA, removing extra 3' nucleotides from tRNA precursor, generating 3' termini of tRNAs. A 3'-hydroxy group is left at the tRNA terminus and a 5'-phosphoryl group is left at the trailer molecule.. Its function is as follows. Zinc phosphodiesterase, which displays some tRNA 3'-processing endonuclease activity. Probably involved in tRNA maturation, by removing a 3'-trailer from precursor tRNA. This Nitrosopumilus maritimus (strain SCM1) protein is Ribonuclease Z.